The primary structure comprises 229 residues: Protein N-lysine methyltransferase METTL21D (229 aa).

N-acetylalanine is present on A2. S8 is modified (phosphoserine). S-adenosyl-L-methionine is bound by residues W43, 75–77 (GSG), D96, W126, A143, and Y148.

Belongs to the methyltransferase superfamily. METTL21 family. Interacts with ALKBH6. Interacts with ASPSCR1 and UBXN6; interaction with ASPSCR1, but not with UBXN6, enhances VCP methylation.

The protein resides in the cytoplasm. The catalysed reaction is L-lysyl-[protein] + 3 S-adenosyl-L-methionine = N(6),N(6),N(6)-trimethyl-L-lysyl-[protein] + 3 S-adenosyl-L-homocysteine + 3 H(+). Protein N-lysine methyltransferase that specifically trimethylates 'Lys-315' of VCP/p97; this modification may decrease VCP ATPase activity. This Homo sapiens (Human) protein is Protein N-lysine methyltransferase METTL21D (VCPKMT).